The primary structure comprises 162 residues: Phosphopantetheine adenylyltransferase (162 aa).

Threonine 10 provides a ligand contact to substrate. ATP contacts are provided by residues threonine 10 to phenylalanine 11 and histidine 18. Lysine 42, leucine 74, and arginine 88 together coordinate substrate. Residues glycine 89–arginine 91, glutamate 99, and phenylalanine 124–threonine 130 contribute to the ATP site.

This sequence belongs to the bacterial CoaD family. Homohexamer. Requires Mg(2+) as cofactor.

It is found in the cytoplasm. The enzyme catalyses (R)-4'-phosphopantetheine + ATP + H(+) = 3'-dephospho-CoA + diphosphate. The protein operates within cofactor biosynthesis; coenzyme A biosynthesis; CoA from (R)-pantothenate: step 4/5. Functionally, reversibly transfers an adenylyl group from ATP to 4'-phosphopantetheine, yielding dephospho-CoA (dPCoA) and pyrophosphate. This chain is Phosphopantetheine adenylyltransferase, found in Francisella tularensis subsp. novicida (strain U112).